Consider the following 83-residue polypeptide: Type 3 secretion system needle filament protein (83 aa).

It belongs to the SctF family. As to quaternary structure, the core secretion machinery of the T3SS is composed of approximately 20 different proteins, including cytoplasmic components, a base, an export apparatus and a needle. This subunit polymerizes and forms the helical needle filament. Interacts with the needle tip protein IpaD/SctA. Interacts with the export apparatus components SpaP/SctR, SpaQ/SctS and SpaR/SctT.

The protein localises to the secreted. It is found in the cell surface. Component of the type III secretion system (T3SS), also called injectisome, which is used to inject bacterial effector proteins into eukaryotic host cells. MxiH/SctF forms the external needle filament that protrudes from the bacterial surface. Functionally, during infection, can induce innate immune responses. The needle proteins interact with host TLR2 or TLR4, and induce signaling by NF-kappa-B and/or AP-1. This activation is MyD88 dependent and results in increased expression of cytokines, including TNF-alpha, IL-6 and IL-8. This is Type 3 secretion system needle filament protein from Shigella flexneri.